The chain runs to 507 residues: Glycerol kinase (507 aa).

Thr-14 contacts ADP. Residues Thr-14, Thr-15, and Ser-16 each contribute to the ATP site. Thr-14 lines the sn-glycerol 3-phosphate pocket. Arg-18 contacts ADP. Sn-glycerol 3-phosphate contacts are provided by Arg-84, Glu-85, Tyr-136, and Asp-246. Glycerol-binding residues include Arg-84, Glu-85, Tyr-136, Asp-246, and Gln-247. ADP-binding residues include Thr-268 and Gly-311. ATP is bound by residues Thr-268, Gly-311, Gln-315, and Gly-412. Gly-412 and Asn-416 together coordinate ADP.

This sequence belongs to the FGGY kinase family.

The catalysed reaction is glycerol + ATP = sn-glycerol 3-phosphate + ADP + H(+). Its pathway is polyol metabolism; glycerol degradation via glycerol kinase pathway; sn-glycerol 3-phosphate from glycerol: step 1/1. Inhibited by fructose 1,6-bisphosphate (FBP). In terms of biological role, key enzyme in the regulation of glycerol uptake and metabolism. Catalyzes the phosphorylation of glycerol to yield sn-glycerol 3-phosphate. The sequence is that of Glycerol kinase from Vibrio atlanticus (strain LGP32) (Vibrio splendidus (strain Mel32)).